The following is a 375-amino-acid chain: MSVTELKERHMAATQTVSDLREKLKQKRLQLLDTDVSGYARSQGKTPVTFGPTDLVCCRILQGHTGKVYSLDWTPEKNRIVSASQDGRLIVWNALTSQKTHAIKLPCAWVMTCAFSPSGQSVACGGLDSVCSIYNLNSPIDKDGNHPVSRMLSGHKGYVSSCQYVPDEDTHLITSSGDQTCVLWDITTGLRTSVFGGEFQSGHTADVQSVSISSSNPRLFVSGSCDTTARLWDNRVASRAQRTFYGHEGDVNTVKFFPDGNRFGTGSEDGTCRLFDIRTGHQLQVYYQPHGDGDIPHVTSMAFSISGRLLFVGYSNGDCYVWDTLLAKVVLNLGGVQNSHEGRISCLGLSADGSALCTGSWDTNLKIWAFGGTEV.

7 WD repeats span residues Gly-63–Asn-93, Leu-105–Asn-135, Gly-154–Asp-185, Gly-202–Asp-233, Gly-246–Asp-276, Gly-293–Asp-323, and Ser-339–Ala-369.

This sequence belongs to the WD repeat G protein beta family. G proteins are composed of 3 units, alpha, beta and gamma.

Its function is as follows. Guanine nucleotide-binding proteins (G proteins) are involved as a modulator or transducer in various transmembrane signaling systems. The beta and gamma chains are required for the GTPase activity, for replacement of GDP by GTP, and for G protein-effector interaction. The polypeptide is Guanine nucleotide-binding protein subunit beta (Nicotiana tabacum (Common tobacco)).